A 159-amino-acid chain; its full sequence is Aspartate carbamoyltransferase regulatory chain (159 aa).

Zn(2+)-binding residues include C111, C116, C141, and C144.

Belongs to the PyrI family. As to quaternary structure, contains catalytic and regulatory chains. It depends on Zn(2+) as a cofactor.

In terms of biological role, involved in allosteric regulation of aspartate carbamoyltransferase. The sequence is that of Aspartate carbamoyltransferase regulatory chain from Aeropyrum pernix (strain ATCC 700893 / DSM 11879 / JCM 9820 / NBRC 100138 / K1).